A 338-amino-acid chain; its full sequence is Tripartite motif-containing protein 44 (338 aa).

Disordered stretches follow at residues 1–25 and 72–162; these read MASG…EPDE and ARGD…EFDP. Acidic residues predominate over residues 95–162; that stretch reads EAGEGIESEE…ETEAESEFDP (68 aa). A coiled-coil region spans residues 109–153; sequence EEESETEEESEDESEEDSEEEMEDEQESEAEEDNQEEGESEAEGE. Residues 171-212 form a B box-type zinc finger; that stretch reads VAKRKCPDHGLDLSTYCQEDKQLICVLCPVIGAHHGHHLSTL. Positions 176, 179, 198, and 204 each coordinate Zn(2+). Positions 257–322 form a coiled coil; it reads QQEFKKVQKV…QLDTSNESAE (66 aa). The disordered stretch occupies residues 307–338; it reads MAQAKEQLDTSNESAEPKAEGDEEEPGGTDED. A compositionally biased stretch (acidic residues) spans 327 to 338; the sequence is GDEEEPGGTDED.

In terms of assembly, interacts (via coiled coil) with TRIM17 (via coiled coil).

Functionally, may play a role in the process of differentiation and maturation of neuronal cells. May regulate the activity of TRIM17. Is a negative regulator of PAX6 expression. The chain is Tripartite motif-containing protein 44 (TRIM44) from Bos taurus (Bovine).